The sequence spans 445 residues: Glycerophosphocholine choline phosphodiesterase ENPP6 (445 aa).

Residues 1-22 (MAGKLGVLLLALVLSLAQPASA) form the signal peptide. Residues aspartate 32, serine 71, and asparagine 92 each contribute to the substrate site. 2 residues coordinate Zn(2+): aspartate 32 and serine 71. Serine 71 functions as the Nucleophile in the catalytic mechanism. Serine 71 is modified (phosphoserine). N-linked (GlcNAc...) asparagine glycosylation is found at asparagine 100 and asparagine 118. Cysteine 142 and cysteine 154 are disulfide-bonded. Aspartate 193 is a substrate binding site. Residues aspartate 193, histidine 197, aspartate 240, and histidine 241 each coordinate Zn(2+). Residue histidine 241 coordinates substrate. N-linked (GlcNAc...) asparagine glycosylation is present at asparagine 341. Substrate is bound at residue histidine 356. Histidine 356 is a Zn(2+) binding site. A glycan (N-linked (GlcNAc...) asparagine) is linked at asparagine 406. Residue serine 421 is the site of GPI-anchor amidated serine attachment. Positions 422 to 445 (SAPGAPPCACALVTVLLVLLAILA) are cleaved as a propeptide — removed in mature form.

It belongs to the nucleotide pyrophosphatase/phosphodiesterase family. In terms of assembly, homodimer; disulfide-linked. Homotetramer. Requires Zn(2+) as cofactor.

The protein localises to the cell membrane. It catalyses the reaction sn-glycerol 3-phosphocholine + H2O = phosphocholine + glycerol + H(+). The enzyme catalyses a 1-acyl-sn-glycero-3-phosphocholine + H2O = a 1-acyl-sn-glycerol + phosphocholine + H(+). It carries out the reaction a 1-O-alkyl-sn-glycero-3-phosphocholine + H2O = a 1-O-alkyl-sn-glycerol + phosphocholine + H(+). The catalysed reaction is 1-dodecanoyl-sn-glycero-3-phosphocholine + H2O = 1-dodecanoyl-sn-glycerol + phosphocholine + H(+). It catalyses the reaction 1-hexadecanoyl-sn-glycero-3-phosphocholine + H2O = 1-hexadecanoyl-sn-glycerol + phosphocholine + H(+). The enzyme catalyses 1-(5Z,8Z,11Z,14Z-eicosatetraenoyl)-sn-glycero-3-phosphocholine + H2O = 1-(5Z,8Z,11Z,14Z-eicosatetraenoyl)-sn-glycerol + phosphocholine + H(+). It carries out the reaction 1-tetradecanoyl-sn-glycero-3-phosphocholine + H2O = 1-tetradecanoyl-sn-glycerol + phosphocholine + H(+). The catalysed reaction is sphing-4-enine-phosphocholine + H2O = sphing-4-enine + phosphocholine + H(+). It catalyses the reaction 1-(9Z-octadecenoyl)-sn-glycero-3-phosphocholine + H2O = 1-(9Z-octadecenoyl)-sn-glycerol + phosphocholine + H(+). The enzyme catalyses 1-(9Z,12Z)-octadecadienoyl-sn-glycero-3-phosphocholine + H2O = 1-(9Z,12Z-octadecadienoyl)-sn-glycerol + phosphocholine + H(+). It carries out the reaction glycero-2-phosphocholine + H2O = phosphocholine + glycerol + H(+). Its activity is regulated as follows. Inhibited by EDTA and EGTA in vitro. In terms of biological role, choline-specific glycerophosphodiesterase that hydrolyzes glycerophosphocholine (GPC) and lysophosphatidylcholine (LPC) and contributes to supplying choline to the cells. Has a preference for LPC with short (12:0 and 14:0) or polyunsaturated (18:2 and 20:4) fatty acids. In vitro, hydrolyzes only choline-containing lysophospholipids, such as sphingosylphosphorylcholine (SPC), platelet-activating factor (PAF) and lysoPAF, but not other lysophospholipids. The chain is Glycerophosphocholine choline phosphodiesterase ENPP6 from Bos taurus (Bovine).